Reading from the N-terminus, the 125-residue chain is Ino eighty subunit 5 (125 aa).

Thr-124 bears the Phosphothreonine mark.

In terms of assembly, component of the chromatin-remodeling INO80 complex, at least composed of ARP4, ARP5, ARP8, RVB1, RVB2, TAF14, NHP10, IES1, IES3, IES4, IES6, ACT1, IES2, IES5 and INO80.

The protein localises to the nucleus. In Saccharomyces cerevisiae (strain ATCC 204508 / S288c) (Baker's yeast), this protein is Ino eighty subunit 5 (IES5).